Here is a 330-residue protein sequence, read N- to C-terminus: Polyprenyl transferase dpfgC (330 aa).

N-linked (GlcNAc...) asparagine glycosylation is present at asparagine 34. The next 7 helical transmembrane spans lie at 105–125 (ALCVLAAYLFCGAGMVWNDWI), 146–166 (VTTTEAMVWMTLQVIMSWGVL), 175–192 (VLKHLIPVMVASVLYPFG), 199–219 (KLMIYPQYILAFTIAWPAIPG), 237–257 (CLPLCIMVFFWTIYLNTAYSY), 273–293 (NIAGNHIHVLLVLLVSPIILA), and 310–330 (NFILGVWTILACAAEVFLTSA).

It belongs to the UbiA prenyltransferase family. Mg(2+) is required as a cofactor.

It localises to the membrane. The protein operates within secondary metabolite biosynthesis; terpenoid biosynthesis. Functionally, polyprenyl transferase; part of the gene cluster that mediates the biosynthesis of diterpenoid pyrones. The first step of the pathway is the synthesis of the alpha-pyrone moiety by the polyketide synthase dpfgA via condensation of one acetyl-CoA starter unit with 3 malonyl-CoA units and 2 methylations. The alpha-pyrone is then combined with geranylgeranyl pyrophosphate (GGPP) formed by the GGPP synthase dpfgD through the action of the prenyltransferase dpfgC to yield a linear alpha-pyrone diterpenoid. Subsequent steps in the diterpenoid pyrone biosynthetic pathway involve the decalin core formation, which is initiated by the epoxidation of the C10-C11 olefin by the FAD-dependent oxidoreductase dpfgE, and is followed by a cyclization cascade catalyzed by the terpene cyclase dpfgB. The short chain dehydrogenase/reductase dpfgG then oxidizes the 8S hydroxy group to a ketone and the short chain dehydrogenase/reductase dpfgH reduces the ketone to the 8R hydroxy group to yield higginsianin B. Higginsianin B is further methylated by the methyltransferase dpfgI to produce the intermediate named FDDP B. The cytochrome P450 monooxygenase dfgpJ then catalyzes a three-step oxidation at C-27 to generate a carboxylic acid as well as C-26 hydroxylation. Finally, methyltransferase dpfgK methylates the carboxylic acid generated by dpfgJ, yielding the final diterpenoid pyrones from the pathway which were named FDDP D and FDDP E. The sequence is that of Polyprenyl transferase dpfgC from Gibberella zeae (strain ATCC MYA-4620 / CBS 123657 / FGSC 9075 / NRRL 31084 / PH-1) (Wheat head blight fungus).